Consider the following 370-residue polypeptide: MAVAAAAAATAMSAAGGGGASAARSISRFRGCLAGALLGDCVGAVYEAHDTVSLASVLSHVESLEPDPGTPGSARTETLYYTDDTAMTRALVQSLLAKEAFDEVDMAHRFAQEYKKDPDRGYGAGVITVFKKLLNPKCRDVYEPARAQFNGKGSYGNGGAMRVAGISLAYSSVQDVQKFARLSAQLTHASSLGYNGAILQALAVHLALQGVSSSEHFLEQLLGHMEELEGDAQSVLDAKELGMEERPYSSRLKKVGELLDQDVVSREEVVSELGNGIAAFESVPTAIYCFLRCMEPHPEIPSTFNSLQRTLIYSISLGGDTDTIATMAGAIAGAYYGMEQVPESWQQSCEGFEETDVLAQSLHRVFQESS.

Residue Glu47 coordinates Mg(2+). Residue Thr70 is modified to Phosphothreonine. Positions 82, 83, and 84 each coordinate Mg(2+). Substrate is bound at residue Asp83. Substrate-binding positions include 152-158 (KGSYGNG), His188, Leu241, and Ile277. Mg(2+) is bound by residues Asp320, Asp322, and Thr323.

Belongs to the ADP-ribosylglycohydrolase family. In terms of assembly, monomer. Requires Mg(2+) as cofactor. Ubiquitous.

The protein resides in the nucleus. It localises to the cytoplasm. It is found in the chromosome. The protein localises to the mitochondrion matrix. It catalyses the reaction [(1''-&gt;2')-ADP-alpha-D-ribose](n) + H2O = [(1''-&gt;2')-ADP-alpha-D-ribose](n-1) + ADP-D-ribose. The enzyme catalyses 1''-O-acetyl-ADP-alpha-D-ribose + H2O = ADP-D-ribose + acetate + H(+). It carries out the reaction O-(ADP-D-ribosyl)-L-seryl-[protein] + H2O = ADP-D-ribose + L-seryl-[protein]. The catalysed reaction is alpha-NAD(+) + H2O = ADP-D-ribose + nicotinamide + H(+). Its activity is regulated as follows. The protein undergoes a dramatic conformational switch from closed to open states upon substrate-binding, which enables specific substrate recognition for the 1''-O-linkage. The glutamate flap (Glu-47) blocks substrate entrance to Mg(2+) in the unliganded closed state. In presence of substrate, Glu-47 is ejected from the active site: this closed-to-open transition significantly widens the substrate-binding channel and precisely positions the scissile 1''-O-linkage for cleavage while securing tightly 2'- and 3'-hydroxyls of ADP-ribose. In terms of biological role, ADP-ribosylhydrolase that preferentially hydrolyzes the scissile alpha-O-linkage attached to the anomeric C1'' position of ADP-ribose and acts on different substrates, such as proteins ADP-ribosylated on serine and threonine, free poly(ADP-ribose) and O-acetyl-ADP-D-ribose. Specifically acts as a serine mono-ADP-ribosylhydrolase by mediating the removal of mono-ADP-ribose attached to serine residues on proteins, thereby playing a key role in DNA damage response. Serine ADP-ribosylation of proteins constitutes the primary form of ADP-ribosylation of proteins in response to DNA damage. Does not hydrolyze ADP-ribosyl-arginine, -cysteine, -diphthamide, or -asparagine bonds. Also able to degrade protein free poly(ADP-ribose), which is synthesized in response to DNA damage: free poly(ADP-ribose) acts as a potent cell death signal and its degradation by ADPRHL2 protects cells from poly(ADP-ribose)-dependent cell death, a process named parthanatos. Also hydrolyzes free poly(ADP-ribose) in mitochondria. Specifically digests O-acetyl-ADP-D-ribose, a product of deacetylation reactions catalyzed by sirtuins. Specifically degrades 1''-O-acetyl-ADP-D-ribose isomer, rather than 2''-O-acetyl-ADP-D-ribose or 3''-O-acetyl-ADP-D-ribose isomers. The sequence is that of ADP-ribosylhydrolase ARH3 (Adprs) from Mus musculus (Mouse).